A 187-amino-acid polypeptide reads, in one-letter code: Early E3 20.6 kDa glycoprotein (187 aa).

Residues N30, N73, N117, N134, and N135 are each glycosylated (N-linked (GlcNAc...) asparagine; by host).

Belongs to the adenoviridae E3_20 family.

The polypeptide is Early E3 20.6 kDa glycoprotein (Human adenovirus B serotype 11 (strain Slobiski) (HAdV-11)).